The following is a 292-amino-acid chain: Homoserine kinase (292 aa).

ATP is bound at residue 84–94 (PLSRGLGSSSA).

The protein belongs to the GHMP kinase family. Homoserine kinase subfamily.

The protein resides in the cytoplasm. It catalyses the reaction L-homoserine + ATP = O-phospho-L-homoserine + ADP + H(+). It participates in amino-acid biosynthesis; L-threonine biosynthesis; L-threonine from L-aspartate: step 4/5. Its function is as follows. Catalyzes the ATP-dependent phosphorylation of L-homoserine to L-homoserine phosphate. This Campylobacter jejuni subsp. jejuni serotype O:6 (strain 81116 / NCTC 11828) protein is Homoserine kinase.